The sequence spans 209 residues: ATP-dependent Clp protease proteolytic subunit 2 (209 aa).

Catalysis depends on Ser107, which acts as the Nucleophile. His132 is an active-site residue.

This sequence belongs to the peptidase S14 family. In terms of assembly, fourteen ClpP subunits assemble into 2 heptameric rings which stack back to back to give a disk-like structure with a central cavity, resembling the structure of eukaryotic proteasomes.

It localises to the cytoplasm. It carries out the reaction Hydrolysis of proteins to small peptides in the presence of ATP and magnesium. alpha-casein is the usual test substrate. In the absence of ATP, only oligopeptides shorter than five residues are hydrolyzed (such as succinyl-Leu-Tyr-|-NHMec, and Leu-Tyr-Leu-|-Tyr-Trp, in which cleavage of the -Tyr-|-Leu- and -Tyr-|-Trp bonds also occurs).. In terms of biological role, cleaves peptides in various proteins in a process that requires ATP hydrolysis. Has a chymotrypsin-like activity. Plays a major role in the degradation of misfolded proteins. In Corynebacterium jeikeium (strain K411), this protein is ATP-dependent Clp protease proteolytic subunit 2.